The primary structure comprises 567 residues: Thiol:disulfide interchange protein DsbD (567 aa).

The first 19 residues, 1–19 (MAQRIFTLILLLCSTSAFA), serve as a signal peptide directing secretion. 2 disulfide bridges follow: Cys-122–Cys-128 and Cys-185–Cys-307. 7 consecutive transmembrane segments (helical) span residues 170–192 (ALWALLIGIGIAFTPCVLPMYPL), 212–234 (LAFIYVQGMALTYTALGLVVAAA), 246–268 (YVLIGLAIVFTLLALSMFGLFTL), 297–319 (GAIAGLICSPCTTAPLSAILLYI), 326–348 (WLGGGTLYLYALGMGLPLMLVTV), 358–380 (GPWMAHVKTAFGFVILALPVFLL), and 387–409 (AWGLRLWSLLGVAFFGWAFITSL). The Thioredoxin domain maps to 435–567 (QDWAFGSPSA…FSAHLHDRQP (133 aa)). A disulfide bond links Cys-482 and Cys-485.

Belongs to the thioredoxin family. DsbD subfamily.

It is found in the cell inner membrane. It carries out the reaction [protein]-dithiol + NAD(+) = [protein]-disulfide + NADH + H(+). The enzyme catalyses [protein]-dithiol + NADP(+) = [protein]-disulfide + NADPH + H(+). Its function is as follows. Required to facilitate the formation of correct disulfide bonds in some periplasmic proteins and for the assembly of the periplasmic c-type cytochromes. Acts by transferring electrons from cytoplasmic thioredoxin to the periplasm. This transfer involves a cascade of disulfide bond formation and reduction steps. This is Thiol:disulfide interchange protein DsbD from Salmonella typhimurium (strain LT2 / SGSC1412 / ATCC 700720).